Here is a 441-residue protein sequence, read N- to C-terminus: Probable membrane metalloprotease ARASP2, chloroplastic (441 aa).

The N-terminal 84 residues, Met1–Glu84, are a transit peptide targeting the chloroplast. His96 provides a ligand contact to Zn(2+). Residue Glu97 is part of the active site. His100 is a binding site for Zn(2+). Residues Val171–Thr191 traverse the membrane as a helical segment. The PDZ domain maps to Val196–Val249. The next 2 helical transmembrane spans lie at Leu373–Leu393 and Val407–Ile427.

It belongs to the peptidase M50A family. It depends on Zn(2+) as a cofactor.

Its subcellular location is the plastid. It localises to the chloroplast inner membrane. In terms of biological role, metalloprotease essential for chloroplast and plant development. May be involved in regulated intramembrane proteolysis (RIP). The polypeptide is Probable membrane metalloprotease ARASP2, chloroplastic (Arabidopsis thaliana (Mouse-ear cress)).